We begin with the raw amino-acid sequence, 169 residues long: MMPFDIRVGQGYDVHALVPGRKLILGGVEIPHDRGLLGHSDADALLHAVTDALFGAAALGDIGRHFPDTDAQFAGADSRVLLREAARRVREAGYEIGNVDATVIAQAPKLAPHIGAMVANLAEDLGIARGRCNVKAKTNEKLGFEGRQEGIVAQAAVLLWRASVGDAQD.

A divalent metal cation contacts are provided by aspartate 13 and histidine 15. 4-CDP-2-C-methyl-D-erythritol 2-phosphate contacts are provided by residues 13–15 (DVH) and 39–40 (HS). Histidine 47 contributes to the a divalent metal cation binding site. 4-CDP-2-C-methyl-D-erythritol 2-phosphate contacts are provided by residues 61-63 (DIG), 66-70 (FPDTD), phenylalanine 144, and arginine 147.

It belongs to the IspF family. As to quaternary structure, homotrimer. The cofactor is a divalent metal cation.

It carries out the reaction 4-CDP-2-C-methyl-D-erythritol 2-phosphate = 2-C-methyl-D-erythritol 2,4-cyclic diphosphate + CMP. It participates in isoprenoid biosynthesis; isopentenyl diphosphate biosynthesis via DXP pathway; isopentenyl diphosphate from 1-deoxy-D-xylulose 5-phosphate: step 4/6. Its function is as follows. Involved in the biosynthesis of isopentenyl diphosphate (IPP) and dimethylallyl diphosphate (DMAPP), two major building blocks of isoprenoid compounds. Catalyzes the conversion of 4-diphosphocytidyl-2-C-methyl-D-erythritol 2-phosphate (CDP-ME2P) to 2-C-methyl-D-erythritol 2,4-cyclodiphosphate (ME-CPP) with a corresponding release of cytidine 5-monophosphate (CMP). The protein is 2-C-methyl-D-erythritol 2,4-cyclodiphosphate synthase of Cupriavidus necator (strain ATCC 17699 / DSM 428 / KCTC 22496 / NCIMB 10442 / H16 / Stanier 337) (Ralstonia eutropha).